The following is a 130-amino-acid chain: Small ribosomal subunit protein uS8 (130 aa).

The protein belongs to the universal ribosomal protein uS8 family.

The protein is Small ribosomal subunit protein uS8 (rps22) of Agaricus bisporus (White button mushroom).